The following is a 92-amino-acid chain: MPKKNAISESTNSTPETAPAMTFESSLKELEQIVARLESGELALEEALSKFERGIQLARQGQQTLQQAEQRVQILLNDDTQSPLSHFSPDTE.

Residues 1 to 22 form a disordered region; sequence MPKKNAISESTNSTPETAPAMT. Polar residues predominate over residues 7–16; sequence ISESTNSTPE.

It belongs to the XseB family. As to quaternary structure, heterooligomer composed of large and small subunits.

The protein localises to the cytoplasm. The catalysed reaction is Exonucleolytic cleavage in either 5'- to 3'- or 3'- to 5'-direction to yield nucleoside 5'-phosphates.. Bidirectionally degrades single-stranded DNA into large acid-insoluble oligonucleotides, which are then degraded further into small acid-soluble oligonucleotides. This Photorhabdus laumondii subsp. laumondii (strain DSM 15139 / CIP 105565 / TT01) (Photorhabdus luminescens subsp. laumondii) protein is Exodeoxyribonuclease 7 small subunit.